Reading from the N-terminus, the 256-residue chain is Imidazole glycerol phosphate synthase subunit hisF1 (256 aa).

Catalysis depends on residues aspartate 11 and aspartate 130.

It belongs to the HisA/HisF family. In terms of assembly, heterodimer of HisH and HisF.

The protein localises to the cytoplasm. The catalysed reaction is 5-[(5-phospho-1-deoxy-D-ribulos-1-ylimino)methylamino]-1-(5-phospho-beta-D-ribosyl)imidazole-4-carboxamide + L-glutamine = D-erythro-1-(imidazol-4-yl)glycerol 3-phosphate + 5-amino-1-(5-phospho-beta-D-ribosyl)imidazole-4-carboxamide + L-glutamate + H(+). The protein operates within amino-acid biosynthesis; L-histidine biosynthesis; L-histidine from 5-phospho-alpha-D-ribose 1-diphosphate: step 5/9. Functionally, IGPS catalyzes the conversion of PRFAR and glutamine to IGP, AICAR and glutamate. The HisF subunit catalyzes the cyclization activity that produces IGP and AICAR from PRFAR using the ammonia provided by the HisH subunit. This chain is Imidazole glycerol phosphate synthase subunit hisF1 (hisF1), found in Parasynechococcus marenigrum (strain WH8102).